Consider the following 544-residue polypeptide: Regulator of G-protein signaling 14 (544 aa).

The disordered stretch occupies residues Val-19–Gln-59. Phosphoserine is present on residues Ser-20, Ser-42, Ser-45, Ser-143, Ser-199, Ser-203, Ser-218, and Ser-286. Residues Glu-23–Glu-58 show a composition bias toward polar residues. The region spanning Ser-67–Leu-184 is the RGS domain. Positions Arg-191–Pro-220 are disordered. The interval Arg-297–Val-424 is necessary for interaction with RABGEF1. 2 RBD domains span residues Lys-300–Arg-371 and Thr-373–Leu-443. Residues Arg-449–Gln-493 are disordered. Ser-481 carries the phosphoserine modification. Residues Ile-497–Leu-519 enclose the GoLoco domain.

As to quaternary structure, interacts with GNAI1, GNAI2 and GNAI3. Interacts with GNAO1. Interacts (via RGS and GoLoco domains) with GNAI1; the interaction occurs in the centrosomes. Interaction with GNAI1 or GNAI3 (via active GTP- or inactive GDP-bound forms) prevents association of RGS14 with centrosomes or nuclear localization. Interacts with RABGEF1; the interactions is GTP-dependent. Interacts with RAP2A; the interactions is GTP-dependent and does not alter its function on G(i) alpha subunits either as GAP or as GDI. Associates with microtubules. Found in a complex with at least BRAF, HRAS, MAP2K1, MAPK3 and RGS14. Interacts with RIC8A (via C-terminus). Interacts (via RBD 1 domain) with HRAS (active GTP-bound form preferentially). Interacts (via RBD domains) with BRAF (via N-terminus); the interaction mediates the formation of a ternary complex with RAF1. Interacts (via RBD domains) with RAF1 (via N-terminus); the interaction mediates the formation of a ternary complex with BRAF. Interacts with KRAS (active GTP-bound form preferentially), MRAS (active GTP-bound form preferentially), NRAS (active GTP-bound form preferentially) and RRAS (active GTP-bound form preferentially). In terms of processing, phosphorylated by PKC. Phosphorylation is increased in presence of forskolin and may enhance the GDI activity on G(i) alpha subunit GNAI1. As to expression, expressed in neurons of the V2 secondary visual cortex area (at protein level). Expressed at high levels in the brain cortex, hippocampus, striatum, thalamus and substantia nigra, in the lung, and spleen. Low expression has been found in heart, liver, skeletal muscle and testis.

Its subcellular location is the nucleus. The protein resides in the PML body. The protein localises to the cytoplasm. It is found in the membrane. It localises to the cell membrane. Its subcellular location is the cytoskeleton. The protein resides in the microtubule organizing center. The protein localises to the centrosome. It is found in the spindle. It localises to the spindle pole. Its subcellular location is the cell projection. The protein resides in the dendrite. The protein localises to the dendritic spine. It is found in the postsynaptic density. In terms of biological role, regulates G protein-coupled receptor signaling cascades. Inhibits signal transduction by increasing the GTPase activity of G protein alpha subunits, thereby driving them into their inactive GDP-bound form. Besides, modulates signal transduction via G protein alpha subunits by functioning as a GDP-dissociation inhibitor (GDI). Has GDI activity on G(i) alpha subunits GNAI1 and GNAI3, but not on GNAI2 and G(o)-alpha subunit GNAO1. Has GAP activity on GNAI0, GNAI2 and GNAI3. May act as a scaffold integrating G protein and Ras/Raf MAPkinase signaling pathways. Inhibits platelet-derived growth factor (PDGF)-stimulated ERK1/ERK2 phosphorylation; a process depending on its interaction with HRAS and that is reversed by G(i) alpha subunit GNAI1. Acts as a positive modulator of microtubule polymerisation and spindle organization through a G(i)-alpha-dependent mechanism. Plays a role in cell division; required for completion of the first mitotic division of the embryo. Involved in visual memory processing capacity; when overexpressed in the V2 secondary visual cortex area. Involved in hippocampal-based learning and memory; acts as a suppressor of synaptic plasticity in CA2 neurons. Required for the nerve growth factor (NGF)-mediated neurite outgrowth. Involved in stress resistance. The chain is Regulator of G-protein signaling 14 (Rgs14) from Rattus norvegicus (Rat).